The following is a 317-amino-acid chain: OVARIAN TUMOR DOMAIN-containing deubiquitinating enzyme 4 (317 aa).

Residues 168–306 (YSIIGIPGDG…FGHYDALLLH (139 aa)) enclose the OTU domain. Asp-176 is an active-site residue. Residue Cys-179 is the Nucleophile of the active site. His-299 is a catalytic residue.

Belongs to the peptidase C65 family.

It localises to the cytoplasm. The enzyme catalyses Thiol-dependent hydrolysis of ester, thioester, amide, peptide and isopeptide bonds formed by the C-terminal Gly of ubiquitin (a 76-residue protein attached to proteins as an intracellular targeting signal).. Hydrolase that can remove conjugated ubiquitin from proteins in vitro and may therefore play an important regulatory role at the level of protein turnover by preventing degradation. Cysteine protease with a preference for 'Lys-63' over 'Lys-48'-linked over 'Met-1' ubiquitin (UB) tetramers (e.g. Ub3 and Ub4) as substrates. Also cleaves RUB-GST fusion. This is OVARIAN TUMOR DOMAIN-containing deubiquitinating enzyme 4 from Arabidopsis thaliana (Mouse-ear cress).